The sequence spans 334 residues: MLLIGVAGTELSAQERDWLQHDAVAGVVLFKRNFASRTQVAELSAAIRAAAPRPVLICVDQEGGRVQRFREGFSALAPLQSFGAQYAQDPEAALAAARAHAQLMASEVRASGVDLSFAPVVDLGRGNRAIGDRAFSDEPQIVATFTRAYVQALHGAGMAATLKHFPGHGTVLEDTHVDHASDPRPLEVLQAEDLVPFVAGIEAGADAVMMAHVVYPQVAPEPAGYSQRWIEQILRGQMGFRGVVFSDDIGMAASFSAGGVAGRVHAHLDAGCDVVLVCHPELVAESLQAVQGRSLNTAALIGLIGRGALGWDGLLAGTDASFTTPLSAHFGTTA.

Substrate-binding positions include aspartate 60, arginine 68, arginine 133, and 163–164 (KH). Histidine 176 serves as the catalytic Proton donor/acceptor. Aspartate 247 functions as the Nucleophile in the catalytic mechanism.

This sequence belongs to the glycosyl hydrolase 3 family. NagZ subfamily.

It is found in the cytoplasm. The catalysed reaction is Hydrolysis of terminal non-reducing N-acetyl-D-hexosamine residues in N-acetyl-beta-D-hexosaminides.. Its pathway is cell wall biogenesis; peptidoglycan recycling. In terms of biological role, plays a role in peptidoglycan recycling by cleaving the terminal beta-1,4-linked N-acetylglucosamine (GlcNAc) from peptide-linked peptidoglycan fragments, giving rise to free GlcNAc, anhydro-N-acetylmuramic acid and anhydro-N-acetylmuramic acid-linked peptides. This Xanthomonas axonopodis pv. citri (strain 306) protein is Beta-hexosaminidase.